Here is a 361-residue protein sequence, read N- to C-terminus: MTEQKAIVTDAPKGGVKYTTIDMPEPEHYDAKLSPVYIGICGTDRGEVAGALSFTYNPEGENFLVLGHEALLRVDDARDNGYIKKGDLVVPLVRRPGKCINCRIGRQDNCSIGDPDKHEAGITGLHGFMRDVIYDDIEYLVKVEDPELGRIAVLTEPLKNVMKAFEVFDVVSKRSIFFGDDSTLIGKRMVIIGSGSEAFLYSFAGVDRGFDVTMVNRHDETENKLKIMDEFGVKFANYLKDMPEKIDLLVDTSGDPTTTFKFLRKVNNNGVVILFGTNGKAPGYPVDGEDIDYIVERNITIAGSVDAAKIHYVQALQSLSNWNRRHPDAMKSIITYEAKPSETNIFFQKPHGEIKTVIKWQ.

Zn(2+) is bound at residue Cys41. Position 43 (Thr43) interacts with substrate. Residues His68 and Glu69 each coordinate Zn(2+). Glu119, Glu156, and Asn160 together coordinate substrate. Glu156 contacts Zn(2+). NADP(+) is bound by residues 216–218 (NRH), 275–277 (FGT), 304–306 (SVD), and Lys349. Asp306 serves as a coordination point for substrate.

This sequence belongs to the zinc-containing alcohol dehydrogenase family. Glucose 1-dehydrogenase subfamily. Homotetramer. It depends on Zn(2+) as a cofactor.

The enzyme catalyses D-glucose + NAD(+) = D-glucono-1,5-lactone + NADH + H(+). It carries out the reaction D-glucose + NADP(+) = D-glucono-1,5-lactone + NADPH + H(+). It catalyses the reaction D-galactose + NAD(+) = D-galactono-1,4-lactone + NADH + H(+). The catalysed reaction is D-galactose + NADP(+) = D-galactono-1,5-lactone + NADPH + H(+). Its function is as follows. Catalyzes the NAD(P)(+)-dependent oxidation of D-glucose to D-gluconate via gluconolactone. Is also significantly active with galactose as substrate, but not with mannose or glucose 6-phosphate. Can utilize both NAD(+) and NADP(+) as electron acceptor, with a marked preference for NADP(+). Physiologically, may be involved in the degradation of both glucose and galactose through a non-phosphorylative variant of the Entner-Doudoroff pathway. The polypeptide is Glucose 1-dehydrogenase (Thermoplasma acidophilum (strain ATCC 25905 / DSM 1728 / JCM 9062 / NBRC 15155 / AMRC-C165)).